The sequence spans 492 residues: Bifunctional purine biosynthesis protein PurH (492 aa).

Positions 1-144 constitute an MGS-like domain; it reads MKKAILSVSN…KNFKHVTTIV (144 aa).

The protein belongs to the PurH family.

It catalyses the reaction (6R)-10-formyltetrahydrofolate + 5-amino-1-(5-phospho-beta-D-ribosyl)imidazole-4-carboxamide = 5-formamido-1-(5-phospho-D-ribosyl)imidazole-4-carboxamide + (6S)-5,6,7,8-tetrahydrofolate. The enzyme catalyses IMP + H2O = 5-formamido-1-(5-phospho-D-ribosyl)imidazole-4-carboxamide. The protein operates within purine metabolism; IMP biosynthesis via de novo pathway; 5-formamido-1-(5-phospho-D-ribosyl)imidazole-4-carboxamide from 5-amino-1-(5-phospho-D-ribosyl)imidazole-4-carboxamide (10-formyl THF route): step 1/1. Its pathway is purine metabolism; IMP biosynthesis via de novo pathway; IMP from 5-formamido-1-(5-phospho-D-ribosyl)imidazole-4-carboxamide: step 1/1. This Staphylococcus epidermidis (strain ATCC 35984 / DSM 28319 / BCRC 17069 / CCUG 31568 / BM 3577 / RP62A) protein is Bifunctional purine biosynthesis protein PurH.